The sequence spans 131 residues: Small ribosomal subunit protein uS8 (131 aa).

It belongs to the universal ribosomal protein uS8 family. As to quaternary structure, part of the 30S ribosomal subunit. Contacts proteins S5 and S12.

In terms of biological role, one of the primary rRNA binding proteins, it binds directly to 16S rRNA central domain where it helps coordinate assembly of the platform of the 30S subunit. The chain is Small ribosomal subunit protein uS8 from Delftia acidovorans (strain DSM 14801 / SPH-1).